The chain runs to 231 residues: Protoporphyrinogen IX dehydrogenase [quinone] (231 aa).

Residues 8 to 178 form the Flavodoxin-like domain; it reads CLMLYSTTDG…AVRRFASDFA (171 aa). Residues 14–18 and 90–158 each bind FMN; these read TTDGH and FFSV…ETDS. The chain crosses the membrane as a helical span at residues 208–228; sequence CLLAIVGMSAAVIVGIRIIAA.

Belongs to the HemG family. The cofactor is FMN.

Its subcellular location is the membrane. The enzyme catalyses protoporphyrinogen IX + 3 a menaquinone = protoporphyrin IX + 3 a menaquinol. The catalysed reaction is protoporphyrinogen IX + 3 a ubiquinone = protoporphyrin IX + 3 a ubiquinol. It catalyses the reaction protoporphyrinogen IX + 3 a quinone = protoporphyrin IX + 3 a quinol. Its pathway is porphyrin-containing compound metabolism; protoporphyrin-IX biosynthesis; protoporphyrin-IX from protoporphyrinogen-IX: step 1/1. Functionally, in E.coli extracts under anerobic conditions catalyzes the 6-electron oxidation of protoporphyrinogen IX to form protoporphyrin IX, transferring electrons to fumarate reductase, presumably via menaquinone. In vitro under aerobic conditions forms protoporphyrin IX using ubiquinone as an electron acceptor. Complements an E.coli hemG deletion, allowing normal growth in vivo. This is Protoporphyrinogen IX dehydrogenase [quinone] from Leishmania major.